We begin with the raw amino-acid sequence, 840 residues long: MSVVGIDLGFQSCYVAVARAGGIETIANEYSDRCTPACVSFGPKNRSVGAAAKSQVISNAKNTVQGFKRFHGRAFSDPFVEAEKSNLAYDIVQLPTGLTGIKVTYMEEERNFTTEQVTAMLLSKLKETAESVLKKPVVDCVVSVPSFYTDAERRSVMDATQIAGLNCLRLMNETTAVALAYGIYKQDLPALEEKPRNVVFVDMGHSAYQVSVCAFNRGKLKVLATAFDTTLGGRKFDEVLVNHFCEEFGKKYKLDIKSKVRALLRLSQECEKLKKLMSANASDLPLSIECFMNDIDVSGTMNRGKFLEMCDDLLARVEPPLRSILDQSKLKKEDIYAVEIVGGATRIPAVKEKISKFFGKELSTTLNADEAVTRGCALQCAILSPAFKVREFSITDVVPYPISLRWNSPAEEGSSDCEVFPKNHAAPFSKVLTFYRKEPFTLEAYYSSPQDLPYPDPAIAQFSVQKVTPQSDGSSSKVKVKVRVNVHGIFSVSSAALVEVHKSEESEEPMETDQNAKEEEKMQVDQEEPHTEEQQPQTPAENKAESEEMETSQAGSKDKKMDQPPQAKKAKVKTSTVDLPIESQLLWQLDREMLGLYTENEGKMIMQDKLEKERNDAKNAVEEYVYEMRDKLSGEYEKFVSEDDRNNFTLKLEDTENWLYEDGEDQPKQVYVDKLAELRTLGQPIKTRFQESEERPKLFEELGKQIQQYMKVISSFKNKEDQYEHLDAADMTKVEKSTNEAMEWMNSKLNLQNKQSLTADPVVKTKEIEAKIKELTNICSPIISKPKPKVEPPKEEPKHAEQNGPVDGQGDNPGTQAAEHGADTAVPSDGDKKLPEMDID.

Lys53 carries the post-translational modification N6-acetyllysine. Ser76 is modified (phosphoserine). Phosphotyrosine is present on residues Tyr89 and Tyr336. Phosphoserine is present on residues Ser393 and Ser415. Residue Lys430 is modified to N6-acetyllysine. Residues 500–575 (VHKSEESEEP…QAKKAKVKTS (76 aa)) are disordered. Over residues 514 to 533 (QNAKEEEKMQVDQEEPHTEE) the composition is skewed to basic and acidic residues. Thr538 is modified (phosphothreonine). Ser546 is modified (phosphoserine). Residue Tyr660 is modified to Phosphotyrosine. Phosphoserine is present on Ser756. Lys773 bears the N6-methyllysine mark. The interval 781–840 (PIISKPKPKVEPPKEEPKHAEQNGPVDGQGDNPGTQAAEHGADTAVPSDGDKKLPEMDID) is disordered. 2 stretches are compositionally biased toward basic and acidic residues: residues 788–801 (PKVE…KHAE) and 829–840 (DGDKKLPEMDID).

It belongs to the heat shock protein 70 family. Interacts with TJP1/ZO-1. In terms of tissue distribution, ubiquitous. Highly expressed in testis.

The protein resides in the cytoplasm. The chain is Heat shock 70 kDa protein 4 (Hspa4) from Rattus norvegicus (Rat).